The following is a 305-amino-acid chain: Sulfate adenylyltransferase subunit 2 1 (305 aa).

The tract at residues R283 to F305 is disordered.

The protein belongs to the PAPS reductase family. CysD subfamily. In terms of assembly, heterodimer composed of CysD, the smaller subunit, and CysN.

The catalysed reaction is sulfate + ATP + H(+) = adenosine 5'-phosphosulfate + diphosphate. It participates in sulfur metabolism; hydrogen sulfide biosynthesis; sulfite from sulfate: step 1/3. In terms of biological role, with CysN forms the ATP sulfurylase (ATPS) that catalyzes the adenylation of sulfate producing adenosine 5'-phosphosulfate (APS) and diphosphate, the first enzymatic step in sulfur assimilation pathway. APS synthesis involves the formation of a high-energy phosphoric-sulfuric acid anhydride bond driven by GTP hydrolysis by CysN coupled to ATP hydrolysis by CysD. This chain is Sulfate adenylyltransferase subunit 2 1, found in Chromohalobacter salexigens (strain ATCC BAA-138 / DSM 3043 / CIP 106854 / NCIMB 13768 / 1H11).